The sequence spans 190 residues: Segregation and condensation protein B (190 aa).

This sequence belongs to the ScpB family. In terms of assembly, homodimer. Homodimerization may be required to stabilize the binding of ScpA to the Smc head domains. Component of a cohesin-like complex composed of ScpA, ScpB and the Smc homodimer, in which ScpA and ScpB bind to the head domain of Smc. The presence of the three proteins is required for the association of the complex with DNA.

The protein localises to the cytoplasm. Participates in chromosomal partition during cell division. May act via the formation of a condensin-like complex containing Smc and ScpA that pull DNA away from mid-cell into both cell halves. The polypeptide is Segregation and condensation protein B (Bacillus cereus (strain AH187)).